A 76-amino-acid chain; its full sequence is uncharacterized protein (76 aa).

The first 20 residues, 1–20 (MKNAVLVFLLLSVFALSVNA), serve as a signal peptide directing secretion.

Prismatic layer of shell (at protein level). Expressed primarily in the mantle with equal levels in the mantle edge and the mantle pallium.

It localises to the secreted. This is an uncharacterized protein from Margaritifera margaritifera (Freshwater pearl mussel).